Consider the following 176-residue polypeptide: Oleosin Ara h 14.0102 (176 aa).

Position 2 is an N-acetylalanine; alternate (Ala-2). The next 2 helical transmembrane spans lie at 61 to 81 (GTLL…LAIA) and 87 to 107 (FFSP…IGIL). The segment at 156–176 (KTKDAGQEIQTKAQDVKRSSS) is disordered.

This sequence belongs to the oleosin family. As to quaternary structure, homodimer. Forms oligomers. As to expression, expressed in seeds (at protein level). Not expressed in leaves.

It localises to the lipid droplet. Its subcellular location is the membrane. In terms of biological role, may have a structural role to stabilize the lipid body during desiccation of the seed by preventing coalescence of the oil. Probably interacts with both lipid and phospholipid moieties of lipid bodies. May also provide recognition signals for specific lipase anchorage in lipolysis during seedling growth. In Arachis hypogaea (Peanut), this protein is Oleosin Ara h 14.0102.